We begin with the raw amino-acid sequence, 622 residues long: FERM domain-containing protein 6 (622 aa).

One can recognise an FERM domain in the interval 16-328; it reads RRVCIFLPND…NSHRLYMNLQ (313 aa). The disordered stretch occupies residues 357–452; it reads LDMDPLEKRS…KDRLEEDSQD (96 aa). 2 stretches are compositionally biased toward low complexity: residues 384–395 and 425–438; these read HSTASHSSSHTS and SSMTSHGSSHTSGV. A Phosphoserine modification is found at S522. The residue at position 523 (T523) is a Phosphothreonine. Phosphoserine occurs at positions 525, 542, and 544.

The protein localises to the cytoplasm. It is found in the cell membrane. The chain is FERM domain-containing protein 6 (Frmd6) from Mus musculus (Mouse).